We begin with the raw amino-acid sequence, 356 residues long: Glucan endo-1,3-beta-glucosidase, acidic isoform GL153 (356 aa).

An N-terminal signal peptide occupies residues 1–29 (MALCIKNGFLAAALVLVGLLMCSIQMIGA). At Q30 the chain carries Pyrrolidone carboxylic acid. N95 is a glycosylation site (N-linked (GlcNAc...) asparagine). E124 acts as the Proton donor in catalysis. E264 (nucleophile) is an active-site residue.

Belongs to the glycosyl hydrolase 17 family. Is expressed primarily in epidermal cell of healthy plant, and following induction by ethylene, accumulates in mesophyll cells.

It is found in the secreted. The protein localises to the extracellular space. It carries out the reaction Hydrolysis of (1-&gt;3)-beta-D-glucosidic linkages in (1-&gt;3)-beta-D-glucans.. Is thought to be an important plant defense-related product against fungal pathogens. The protein is Glucan endo-1,3-beta-glucosidase, acidic isoform GL153 (GGL4) of Nicotiana tabacum (Common tobacco).